We begin with the raw amino-acid sequence, 202 residues long: Shikimate kinase (202 aa).

ATP is bound at residue 20-25 (GSGKST). S24 provides a ligand contact to Mg(2+). 3 residues coordinate substrate: D42, R66, and G88. R126 contributes to the ATP binding site. A substrate-binding site is contributed by R153.

Belongs to the shikimate kinase family. In terms of assembly, monomer. Requires Mg(2+) as cofactor.

The protein localises to the cytoplasm. It catalyses the reaction shikimate + ATP = 3-phosphoshikimate + ADP + H(+). Its pathway is metabolic intermediate biosynthesis; chorismate biosynthesis; chorismate from D-erythrose 4-phosphate and phosphoenolpyruvate: step 5/7. Functionally, catalyzes the specific phosphorylation of the 3-hydroxyl group of shikimic acid using ATP as a cosubstrate. The polypeptide is Shikimate kinase (Chlorobium luteolum (strain DSM 273 / BCRC 81028 / 2530) (Pelodictyon luteolum)).